The following is a 410-amino-acid chain: O-methyltransferase afvC (410 aa).

Residues 253 to 254, Asp278, 299 to 300, and Arg315 contribute to the S-adenosyl-L-methionine site; these read GG and DF. His319 functions as the Proton acceptor in the catalytic mechanism.

It belongs to the class I-like SAM-binding methyltransferase superfamily. Cation-independent O-methyltransferase family. COMT subfamily.

Its pathway is secondary metabolite biosynthesis. Its function is as follows. O-methyltransferase; part of the gene cluster that mediates the biosynthesis of aflavarin, a bicoumarin that exhibits anti-insectan activity against the fungivorous beetle C.hemipterus. The protein is O-methyltransferase afvC of Aspergillus flavus (strain ATCC 200026 / FGSC A1120 / IAM 13836 / NRRL 3357 / JCM 12722 / SRRC 167).